The primary structure comprises 748 residues: Polyribonucleotide nucleotidyltransferase (748 aa).

Mg(2+)-binding residues include Asp-487 and Asp-493. The 60-residue stretch at 554–613 (PSTTTIKIDKDKIRDIIGPGGKVIKEICETSGAKIDISDDGTVSVYASDRDKLKVALDKI) folds into the KH domain. The S1 motif domain maps to 623–691 (GEIFNGTVVK…NKGKAKLTIK (69 aa)). The tract at residues 695–733 (KDKFSNNTKPKTSVNNTKDNSEPEQRHDSSKKRAWNEDN) is disordered. Positions 699–712 (SNNTKPKTSVNNTK) are enriched in polar residues. Over residues 713–722 (DNSEPEQRHD) the composition is skewed to basic and acidic residues.

Belongs to the polyribonucleotide nucleotidyltransferase family. Mg(2+) serves as cofactor.

It localises to the cytoplasm. The catalysed reaction is RNA(n+1) + phosphate = RNA(n) + a ribonucleoside 5'-diphosphate. In terms of biological role, involved in mRNA degradation. Catalyzes the phosphorolysis of single-stranded polyribonucleotides processively in the 3'- to 5'-direction. The sequence is that of Polyribonucleotide nucleotidyltransferase from Rickettsia rickettsii (strain Iowa).